Reading from the N-terminus, the 347-residue chain is Quinolinate synthase (347 aa).

His-47 and Ser-68 together coordinate iminosuccinate. Cys-113 serves as a coordination point for [4Fe-4S] cluster. Iminosuccinate contacts are provided by residues 139–141 (YAN) and Ser-156. Residue Cys-200 coordinates [4Fe-4S] cluster. Iminosuccinate-binding positions include 226-228 (HPE) and Thr-243. Cys-297 is a [4Fe-4S] cluster binding site.

Belongs to the quinolinate synthase family. Type 1 subfamily. Requires [4Fe-4S] cluster as cofactor.

The protein localises to the cytoplasm. The catalysed reaction is iminosuccinate + dihydroxyacetone phosphate = quinolinate + phosphate + 2 H2O + H(+). The protein operates within cofactor biosynthesis; NAD(+) biosynthesis; quinolinate from iminoaspartate: step 1/1. Functionally, catalyzes the condensation of iminoaspartate with dihydroxyacetone phosphate to form quinolinate. The polypeptide is Quinolinate synthase (Salmonella choleraesuis (strain SC-B67)).